The chain runs to 240 residues: Predicted GPI-anchored protein 58 (240 aa).

The first 18 residues, 1–18 (MQFSTLVSLAAVIVSTNA), serve as a signal peptide directing secretion. A disordered region spans residues 41–216 (HTNCPASSPA…NSTGPSSVPT (176 aa)). Over residues 51-86 (TPAPAPSASAPAPPAPEQPEPSAPAPAPSAPAPEQP) the composition is skewed to pro residues. A compositionally biased stretch (low complexity) spans 87–103 (EQPATPATPAAPATPAT). Pro residues-rich tracts occupy residues 104-137 (PAAP…PEQP) and 153-192 (APAP…PAPS). Residues 193–216 (APASVPEQPASSVSNSTGPSSVPT) are compositionally biased toward low complexity. N-linked (GlcNAc...) asparagine glycosylation is present at Asn207. Gly219 carries the GPI-anchor amidated glycine lipid modification. A propeptide spans 220–240 (AAAKQYITGSVAVIAAALLAL) (removed in mature form).

The protein resides in the cell membrane. This is Predicted GPI-anchored protein 58 (PGA58) from Candida albicans (strain SC5314 / ATCC MYA-2876) (Yeast).